Consider the following 230-residue polypeptide: Sugar fermentation stimulation protein homolog (230 aa).

It belongs to the SfsA family.

In Clostridium botulinum (strain Okra / Type B1), this protein is Sugar fermentation stimulation protein homolog.